Reading from the N-terminus, the 404-residue chain is Tryptophan synthase beta chain (404 aa).

Lys-91 bears the N6-(pyridoxal phosphate)lysine mark.

Belongs to the TrpB family. As to quaternary structure, tetramer of two alpha and two beta chains. The cofactor is pyridoxal 5'-phosphate.

It catalyses the reaction (1S,2R)-1-C-(indol-3-yl)glycerol 3-phosphate + L-serine = D-glyceraldehyde 3-phosphate + L-tryptophan + H2O. The protein operates within amino-acid biosynthesis; L-tryptophan biosynthesis; L-tryptophan from chorismate: step 5/5. In terms of biological role, the beta subunit is responsible for the synthesis of L-tryptophan from indole and L-serine. The chain is Tryptophan synthase beta chain from Clavibacter michiganensis subsp. michiganensis (strain NCPPB 382).